We begin with the raw amino-acid sequence, 664 residues long: Zinc finger protein 800 (664 aa).

The C2H2-type 1; degenerate zinc-finger motif lies at 69–91 (FECKLCRSLFRGLPNLITHKKFY). Lys-132 is covalently cross-linked (Glycyl lysine isopeptide (Lys-Gly) (interchain with G-Cter in SUMO2)). Composition is skewed to polar residues over residues 154-179 (IEVT…EQSK) and 207-224 (SDEQ…SDNS). Positions 154–224 (IEVTESSSTP…QADLETSDNS (71 aa)) are disordered. The C2H2-type 2 zinc finger occupies 230–253 (LICCLCRKEFNSRRGVRRHIRKVH). Lys-279 participates in a covalent cross-link: Glycyl lysine isopeptide (Lys-Gly) (interchain with G-Cter in SUMO2). Residues 287 to 310 (RSCPVCCKSFATKANVRRHFDEVH) form a C2H2-type 3 zinc finger. Position 317 is a phosphoserine (Ser-317). Phosphothreonine is present on Thr-319. Residues 328–349 (QPLFLDSISPKKSFKTRKQKSS) are disordered. At Ser-336 the chain carries Phosphoserine. A compositionally biased stretch (basic residues) spans 339–348 (KSFKTRKQKS). Residues 357–382 (TACKCLLCKRKYSSQIMLKRHMQIVH) form a C2H2-type 4 zinc finger. The tract at residues 388–476 (GTNSKREKGP…GGQQKTRKPK (89 aa)) is disordered. A Glycyl lysine isopeptide (Lys-Gly) (interchain with G-Cter in SUMO2) cross-link involves residue Lys-392. Residue Lys-409 forms a Glycyl lysine isopeptide (Lys-Gly) (interchain with G-Cter in SUMO1); alternate linkage. Lys-409 is covalently cross-linked (Glycyl lysine isopeptide (Lys-Gly) (interchain with G-Cter in SUMO2); alternate). Residues 416–436 (VESSPPSITHSPQNELKGTNH) are compositionally biased toward polar residues. Residues Ser-422, Ser-426, Ser-455, Ser-457, Ser-460, and Ser-462 each carry the phosphoserine modification. Over residues 458–470 (PKSTSPSAAGGQQ) the composition is skewed to polar residues. Lys-476 participates in a covalent cross-link: Glycyl lysine isopeptide (Lys-Gly) (interchain with G-Cter in SUMO2). C2H2-type zinc fingers lie at residues 486–508 (LYCK…IELH) and 519–542 (YKCP…TVVH). Disordered stretches follow at residues 574 to 599 (KRGP…PSKK) and 635 to 664 (HHKK…KALV). Basic and acidic residues predominate over residues 577–591 (PSRDEAKHSDSKHDG). Lys-599 participates in a covalent cross-link: Glycyl lysine isopeptide (Lys-Gly) (interchain with G-Cter in SUMO2). The C2H2-type 7 zinc-finger motif lies at 618–640 (HRCNKCGKAFAKKTYLEHHKKTH). Basic residues predominate over residues 653–664 (TKGRSTRSKALV).

The protein belongs to the krueppel C2H2-type zinc-finger protein family.

The protein resides in the nucleus. In terms of biological role, may be involved in transcriptional regulation. The sequence is that of Zinc finger protein 800 (ZNF800) from Homo sapiens (Human).